A 116-amino-acid chain; its full sequence is Peptidyl-tRNA hydrolase (116 aa).

The protein belongs to the PTH2 family.

It is found in the cytoplasm. The enzyme catalyses an N-acyl-L-alpha-aminoacyl-tRNA + H2O = an N-acyl-L-amino acid + a tRNA + H(+). Functionally, the natural substrate for this enzyme may be peptidyl-tRNAs which drop off the ribosome during protein synthesis. In Methanococcus maripaludis (strain DSM 14266 / JCM 13030 / NBRC 101832 / S2 / LL), this protein is Peptidyl-tRNA hydrolase (pth).